A 309-amino-acid chain; its full sequence is Methionyl-tRNA formyltransferase (309 aa).

110-113 (SLLP) lines the (6S)-5,6,7,8-tetrahydrofolate pocket. Residues 289 to 309 (KRMAATDWARGSRIEQGERLK) are disordered. Basic and acidic residues predominate over residues 298-309 (RGSRIEQGERLK).

This sequence belongs to the Fmt family.

It catalyses the reaction L-methionyl-tRNA(fMet) + (6R)-10-formyltetrahydrofolate = N-formyl-L-methionyl-tRNA(fMet) + (6S)-5,6,7,8-tetrahydrofolate + H(+). In terms of biological role, attaches a formyl group to the free amino group of methionyl-tRNA(fMet). The formyl group appears to play a dual role in the initiator identity of N-formylmethionyl-tRNA by promoting its recognition by IF2 and preventing the misappropriation of this tRNA by the elongation apparatus. This is Methionyl-tRNA formyltransferase from Saccharopolyspora erythraea (strain ATCC 11635 / DSM 40517 / JCM 4748 / NBRC 13426 / NCIMB 8594 / NRRL 2338).